Consider the following 149-residue polypeptide: Urease accessory protein UreE (149 aa).

The protein belongs to the UreE family.

The protein resides in the cytoplasm. In terms of biological role, involved in urease metallocenter assembly. Binds nickel. Probably functions as a nickel donor during metallocenter assembly. In Prochlorococcus marinus (strain MIT 9312), this protein is Urease accessory protein UreE.